A 251-amino-acid chain; its full sequence is GTP cyclohydrolase FolE2 (251 aa).

This sequence belongs to the GTP cyclohydrolase IV family.

The enzyme catalyses GTP + H2O = 7,8-dihydroneopterin 3'-triphosphate + formate + H(+). Its pathway is cofactor biosynthesis; 7,8-dihydroneopterin triphosphate biosynthesis; 7,8-dihydroneopterin triphosphate from GTP: step 1/1. In terms of biological role, converts GTP to 7,8-dihydroneopterin triphosphate. In Desulfotalea psychrophila (strain LSv54 / DSM 12343), this protein is GTP cyclohydrolase FolE2.